We begin with the raw amino-acid sequence, 340 residues long: DNA-directed RNA polymerase subunit alpha (340 aa).

Positions 1–236 (MLSLSKNWNT…EQLQLFISFE (236 aa)) are alpha N-terminal domain (alpha-NTD). Residues 246–340 (TDALPFSPYL…LSNRYEDSYN (95 aa)) form an alpha C-terminal domain (alpha-CTD) region.

This sequence belongs to the RNA polymerase alpha chain family. Homodimer. The RNAP catalytic core consists of 2 alpha, 1 beta, 1 beta' and 1 omega subunit. When a sigma factor is associated with the core the holoenzyme is formed, which can initiate transcription.

The enzyme catalyses RNA(n) + a ribonucleoside 5'-triphosphate = RNA(n+1) + diphosphate. DNA-dependent RNA polymerase catalyzes the transcription of DNA into RNA using the four ribonucleoside triphosphates as substrates. This Rickettsia felis (strain ATCC VR-1525 / URRWXCal2) (Rickettsia azadi) protein is DNA-directed RNA polymerase subunit alpha.